Consider the following 330-residue polypeptide: DNA-directed RNA polymerase subunit alpha (330 aa).

Positions 1 to 237 are alpha N-terminal domain (alpha-NTD); sequence MYTEINEMLT…RQLHAFVDMK (237 aa). The tract at residues 251 to 330 is alpha C-terminal domain (alpha-CTD); it reads FDPVLLRSVD…ENWPPASLGE (80 aa).

Belongs to the RNA polymerase alpha chain family. In terms of assembly, homodimer. The RNAP catalytic core consists of 2 alpha, 1 beta, 1 beta' and 1 omega subunit. When a sigma factor is associated with the core the holoenzyme is formed, which can initiate transcription.

The catalysed reaction is RNA(n) + a ribonucleoside 5'-triphosphate = RNA(n+1) + diphosphate. DNA-dependent RNA polymerase catalyzes the transcription of DNA into RNA using the four ribonucleoside triphosphates as substrates. This chain is DNA-directed RNA polymerase subunit alpha, found in Legionella pneumophila (strain Paris).